Reading from the N-terminus, the 345-residue chain is Anthranilate phosphoribosyltransferase (345 aa).

5-phospho-alpha-D-ribose 1-diphosphate is bound by residues G79, 82 to 83, T87, 89 to 92, 106 to 114, and S118; these read GD, NVST, and KHGNRAVSG. G79 lines the anthranilate pocket. Residue S91 participates in Mg(2+) binding. N109 lines the anthranilate pocket. Residue R164 participates in anthranilate binding. Residues D223 and E224 each coordinate Mg(2+).

This sequence belongs to the anthranilate phosphoribosyltransferase family. As to quaternary structure, homodimer. The cofactor is Mg(2+).

The catalysed reaction is N-(5-phospho-beta-D-ribosyl)anthranilate + diphosphate = 5-phospho-alpha-D-ribose 1-diphosphate + anthranilate. It participates in amino-acid biosynthesis; L-tryptophan biosynthesis; L-tryptophan from chorismate: step 2/5. Its function is as follows. Catalyzes the transfer of the phosphoribosyl group of 5-phosphorylribose-1-pyrophosphate (PRPP) to anthranilate to yield N-(5'-phosphoribosyl)-anthranilate (PRA). The polypeptide is Anthranilate phosphoribosyltransferase (Sulfurisphaera tokodaii (strain DSM 16993 / JCM 10545 / NBRC 100140 / 7) (Sulfolobus tokodaii)).